The following is a 353-amino-acid chain: Photosystem II protein D1 (353 aa).

Threonine 2 carries the post-translational modification N-acetylthreonine. Threonine 2 bears the Phosphothreonine mark. The next 3 helical transmembrane spans lie at 29–46 (YIGW…TATS), 118–133 (HFFL…EWEL), and 142–156 (WIAV…AATA). Histidine 118 is a chlorophyll a binding site. Residue tyrosine 126 participates in pheophytin a binding. The [CaMn4O5] cluster site is built by aspartate 170 and glutamate 189. Residues 197–218 (FHMLGVAGVFGGSLFSAMHGSL) traverse the membrane as a helical segment. Chlorophyll a is bound at residue histidine 198. A quinone-binding positions include histidine 215 and 264–265 (SF). Histidine 215 is a binding site for Fe cation. Position 272 (histidine 272) interacts with Fe cation. A helical transmembrane segment spans residues 274-288 (FLAAWPVVGIWFTAL). [CaMn4O5] cluster-binding residues include histidine 332, glutamate 333, aspartate 342, and alanine 344. Residues 345 to 353 (SVEAPSVNG) constitute a propeptide that is removed on maturation.

It belongs to the reaction center PufL/M/PsbA/D family. PSII is composed of 1 copy each of membrane proteins PsbA, PsbB, PsbC, PsbD, PsbE, PsbF, PsbH, PsbI, PsbJ, PsbK, PsbL, PsbM, PsbT, PsbX, PsbY, PsbZ, Psb30/Ycf12, at least 3 peripheral proteins of the oxygen-evolving complex and a large number of cofactors. It forms dimeric complexes. Requires The D1/D2 heterodimer binds P680, chlorophylls that are the primary electron donor of PSII, and subsequent electron acceptors. It shares a non-heme iron and each subunit binds pheophytin, quinone, additional chlorophylls, carotenoids and lipids. D1 provides most of the ligands for the Mn4-Ca-O5 cluster of the oxygen-evolving complex (OEC). There is also a Cl(-1) ion associated with D1 and D2, which is required for oxygen evolution. The PSII complex binds additional chlorophylls, carotenoids and specific lipids. as cofactor. Tyr-161 forms a radical intermediate that is referred to as redox-active TyrZ, YZ or Y-Z. Post-translationally, C-terminally processed by CTPA; processing is essential to allow assembly of the oxygen-evolving complex and thus photosynthetic growth.

The protein localises to the plastid. The protein resides in the chloroplast thylakoid membrane. It catalyses the reaction 2 a plastoquinone + 4 hnu + 2 H2O = 2 a plastoquinol + O2. Photosystem II (PSII) is a light-driven water:plastoquinone oxidoreductase that uses light energy to abstract electrons from H(2)O, generating O(2) and a proton gradient subsequently used for ATP formation. It consists of a core antenna complex that captures photons, and an electron transfer chain that converts photonic excitation into a charge separation. The D1/D2 (PsbA/PsbD) reaction center heterodimer binds P680, the primary electron donor of PSII as well as several subsequent electron acceptors. The protein is Photosystem II protein D1 of Chaetosphaeridium globosum (Charophycean green alga).